The primary structure comprises 550 residues: Dihydroxy-acid dehydratase (550 aa).

Asp78 is a Mg(2+) binding site. Cys119 lines the [2Fe-2S] cluster pocket. Residues Asp120 and Lys121 each contribute to the Mg(2+) site. The residue at position 121 (Lys121) is an N6-carboxylysine. Cys191 contacts [2Fe-2S] cluster. A Mg(2+)-binding site is contributed by Glu440. Ser466 serves as the catalytic Proton acceptor.

Belongs to the IlvD/Edd family. As to quaternary structure, homodimer. [2Fe-2S] cluster serves as cofactor. The cofactor is Mg(2+).

The catalysed reaction is (2R)-2,3-dihydroxy-3-methylbutanoate = 3-methyl-2-oxobutanoate + H2O. It catalyses the reaction (2R,3R)-2,3-dihydroxy-3-methylpentanoate = (S)-3-methyl-2-oxopentanoate + H2O. It functions in the pathway amino-acid biosynthesis; L-isoleucine biosynthesis; L-isoleucine from 2-oxobutanoate: step 3/4. Its pathway is amino-acid biosynthesis; L-valine biosynthesis; L-valine from pyruvate: step 3/4. Functions in the biosynthesis of branched-chain amino acids. Catalyzes the dehydration of (2R,3R)-2,3-dihydroxy-3-methylpentanoate (2,3-dihydroxy-3-methylvalerate) into 2-oxo-3-methylpentanoate (2-oxo-3-methylvalerate) and of (2R)-2,3-dihydroxy-3-methylbutanoate (2,3-dihydroxyisovalerate) into 2-oxo-3-methylbutanoate (2-oxoisovalerate), the penultimate precursor to L-isoleucine and L-valine, respectively. In Methanococcus maripaludis (strain C7 / ATCC BAA-1331), this protein is Dihydroxy-acid dehydratase.